We begin with the raw amino-acid sequence, 259 residues long: 5'-nucleotidase SurE (259 aa).

Residues aspartate 8, aspartate 9, serine 41, and asparagine 93 each contribute to the a divalent metal cation site.

The protein belongs to the SurE nucleotidase family. It depends on a divalent metal cation as a cofactor.

It is found in the cytoplasm. It catalyses the reaction a ribonucleoside 5'-phosphate + H2O = a ribonucleoside + phosphate. In terms of biological role, nucleotidase that shows phosphatase activity on nucleoside 5'-monophosphates. The polypeptide is 5'-nucleotidase SurE (Verminephrobacter eiseniae (strain EF01-2)).